Consider the following 332-residue polypeptide: Geranylgeranyl diphosphate synthase (332 aa).

The isopentenyl diphosphate site is built by K45, R48, and H77. The Mg(2+) site is built by D84 and D88. An an all-trans-polyprenyl diphosphate-binding site is contributed by R93. Residue R94 participates in isopentenyl diphosphate binding. Residues K177, T178, Q215, K232, and K242 each contribute to the an all-trans-polyprenyl diphosphate site.

The protein belongs to the FPP/GGPP synthase family. The cofactor is Mg(2+).

It catalyses the reaction isopentenyl diphosphate + (2E,6E)-farnesyl diphosphate = (2E,6E,10E)-geranylgeranyl diphosphate + diphosphate. The protein operates within isoprenoid biosynthesis; geranylgeranyl diphosphate biosynthesis; geranylgeranyl diphosphate from farnesyl diphosphate and isopentenyl diphosphate: step 1/1. Functionally, catalyzes the condensation of isopentenyl pyrophosphate with the allylic pyrophosphates to yield geranylgeranyl diphosphate (GGPP) which is a precursor of the ether-linked lipids. This Saccharolobus solfataricus (strain ATCC 35092 / DSM 1617 / JCM 11322 / P2) (Sulfolobus solfataricus) protein is Geranylgeranyl diphosphate synthase (gds).